The sequence spans 313 residues: Probable cell division protein WhiA (313 aa).

Positions 277 to 311 (SLKEVAAQVPDGPISKSGVNHRFQKIREMAQQLKE) form a DNA-binding region, H-T-H motif.

It belongs to the WhiA family.

Involved in cell division and chromosome segregation. This is Probable cell division protein WhiA from Lactobacillus gasseri (strain ATCC 33323 / DSM 20243 / BCRC 14619 / CIP 102991 / JCM 1131 / KCTC 3163 / NCIMB 11718 / NCTC 13722 / AM63).